Consider the following 283-residue polypeptide: MGLGLRGWGRPLLTVATALMLPVKPPAGSWGAQIIGGHEVTPHSRPYMASVRFGGQHHCGGFLLRARWVVSAAHCFSHRDLRTGLVVLGAHVLSTAEPTQQVFGIDALTTHPDYHPMTHANDICLLRLNGSAVLGPAVGLLRPPGRRARPPTAGTRCRVAGWGFVSDFEELPPGLMEAKVRVLDPDVCNSSWKGHLTLTMLCTRSGDSHRRGFCSADSGGPLVCRNRAHGLVSFSGLWCGDPKTPDVYTQVSAFVAWIWDVVRRSSPQPGPLPGTTRPPGEAA.

Residues 1–31 (MGLGLRGWGRPLLTVATALMLPVKPPAGSWG) form the signal peptide. The region spanning 34-263 (IIGGHEVTPH…FVAWIWDVVR (230 aa)) is the Peptidase S1 domain. Cysteine 59 and cysteine 75 are joined by a disulfide. Residues histidine 74 and aspartate 122 each act as charge relay system in the active site. N-linked (GlcNAc...) asparagine glycans are attached at residues asparagine 129 and asparagine 189. Disulfide bonds link cysteine 157/cysteine 224, cysteine 188/cysteine 202, and cysteine 214/cysteine 239. Serine 218 functions as the Charge relay system in the catalytic mechanism.

The protein belongs to the peptidase S1 family. In terms of processing, after cleavage of the signal peptide, the N-terminus is probably further processed by CTSC. Processing by CTSC is probably required for accumulation in cytoplasmic granules; in the absence of CTSC the protein does not accumulate. N-glycosylated. Detected in peripheral blood neutrophil granulocytes, but not in other types of leukocytes. Detected in neutrophils and neutrophil precursors in bone marrow (at protein level). Detected in myeloblasts and promyelocytes in bone marrow.

It is found in the cytoplasmic granule lumen. Its subcellular location is the secreted. With respect to regulation, inhibited by SERPINA1, SERPINC1 and SERPING1. Functionally, serine protease that cleaves preferentially after Arg residues. Can also cleave after citrulline (deimidated arginine) and methylarginine residues. This Homo sapiens (Human) protein is Serine protease 57 (PRSS57).